A 103-amino-acid chain; its full sequence is Protein RALF-like 18 (103 aa).

A signal peptide spans 1 to 32 (MMNNMKLLIIAVMIISAALLPALVVGSRPVKC). A propeptide spans 33-58 (DNCMDGGEKEEIMKMSSGVDVSHRIL) (removed in mature form). Cys-92 and Cys-98 form a disulfide bridge.

This sequence belongs to the plant rapid alkalinization factor (RALF) family. Proteolytically cleaved, probably by S1P, a subtilisin-like serine protease (subtilase).

Its subcellular location is the secreted. Functionally, cell signaling peptide that may regulate plant stress, growth, and development. Mediates a rapid alkalinization of extracellular space by mediating a transient increase in the cytoplasmic Ca(2+) concentration leading to a calcium-dependent signaling events through a cell surface receptor and a concomitant activation of some intracellular mitogen-activated protein kinases. In Arabidopsis thaliana (Mouse-ear cress), this protein is Protein RALF-like 18 (RALFL18).